The chain runs to 210 residues: Putative transmembrane protein DDB_G0267530 (210 aa).

Residues 1-40 (MGVEDQPQTQPQTQPQQQPQMGYQPQMGYQPQAQMGYQPQ) form a disordered region. The next 2 membrane-spanning stretches (helical) occupy residues 119–139 (VIVF…FFFI) and 148–168 (TFGI…VIVV).

The protein localises to the membrane. This Dictyostelium discoideum (Social amoeba) protein is Putative transmembrane protein DDB_G0267530.